The following is a 640-amino-acid chain: ATP-dependent rRNA helicase spb4 (640 aa).

A Q motif motif is present at residues 14-42 (WDAVTPALSEWVLEAMSSMGFTRMTPVQA). A Helicase ATP-binding domain is found at 45–249 (IPLFMAHKDV…RVGLRNPVKV (205 aa)). 58 to 65 (AVTGSGKT) lines the ATP pocket. The short motif at 197 to 200 (DEAD) is the DEAD box element. One can recognise a Helicase C-terminal domain in the interval 283 to 437 (ALKRIVSSVQ…SISFSDADAA (155 aa)). Residues 521-629 (AYKDKQREKR…VAKAAGAKAD (109 aa)) are a coiled coil. Disordered regions lie at residues 531–593 (RKEL…EEEK) and 607–640 (RKKNEEERRLRRAVAKAAGAKADGDDEEEFQGFD). Residues 577-593 (KSKQEKARWEKMTEEEK) show a composition bias toward basic and acidic residues. A compositionally biased stretch (acidic residues) spans 630 to 640 (GDDEEEFQGFD).

This sequence belongs to the DEAD box helicase family. DDX55/SPB4 subfamily. In terms of assembly, component of pre-60S ribosomal complexes.

It is found in the nucleus. It localises to the nucleolus. It catalyses the reaction ATP + H2O = ADP + phosphate + H(+). Its function is as follows. ATP-binding RNA helicase involved in the biogenesis of 60S ribosomal subunits. Binds 90S pre-ribosomal particles and dissociates from pre-60S ribosomal particles after processing of 27SB pre-rRNA. Required for the normal formation of 18S rRNA through the processing of pre-rRNAs at sites A0, A1 and A2, and the normal formation of 25S and 5.8S rRNAs through the processing of pre-rRNAs at sites C1 and C2. The chain is ATP-dependent rRNA helicase spb4 from Aspergillus fumigatus (strain ATCC MYA-4609 / CBS 101355 / FGSC A1100 / Af293) (Neosartorya fumigata).